Reading from the N-terminus, the 364-residue chain is tRNA N6-adenosine threonylcarbamoyltransferase (364 aa).

Fe cation contacts are provided by histidine 115 and histidine 119. Substrate-binding positions include leucine 137–glycine 141, aspartate 170, glycine 183, and asparagine 288. Aspartate 316 is a binding site for Fe cation.

It belongs to the KAE1 / TsaD family. It depends on Fe(2+) as a cofactor.

It localises to the cytoplasm. The catalysed reaction is L-threonylcarbamoyladenylate + adenosine(37) in tRNA = N(6)-L-threonylcarbamoyladenosine(37) in tRNA + AMP + H(+). In terms of biological role, required for the formation of a threonylcarbamoyl group on adenosine at position 37 (t(6)A37) in tRNAs that read codons beginning with adenine. Is involved in the transfer of the threonylcarbamoyl moiety of threonylcarbamoyl-AMP (TC-AMP) to the N6 group of A37, together with TsaE and TsaB. TsaD likely plays a direct catalytic role in this reaction. This Bartonella tribocorum (strain CIP 105476 / IBS 506) protein is tRNA N6-adenosine threonylcarbamoyltransferase.